The following is a 200-amino-acid chain: 3-isopropylmalate dehydratase small subunit (200 aa).

The protein belongs to the LeuD family. LeuD type 1 subfamily. As to quaternary structure, heterodimer of LeuC and LeuD.

It carries out the reaction (2R,3S)-3-isopropylmalate = (2S)-2-isopropylmalate. The protein operates within amino-acid biosynthesis; L-leucine biosynthesis; L-leucine from 3-methyl-2-oxobutanoate: step 2/4. In terms of biological role, catalyzes the isomerization between 2-isopropylmalate and 3-isopropylmalate, via the formation of 2-isopropylmaleate. The protein is 3-isopropylmalate dehydratase small subunit of Vibrio parahaemolyticus serotype O3:K6 (strain RIMD 2210633).